A 297-amino-acid chain; its full sequence is Acetaldehyde dehydrogenase (297 aa).

Serine 15 to isoleucine 18 contributes to the NAD(+) binding site. The Acyl-thioester intermediate role is filled by cysteine 130. NAD(+) contacts are provided by residues serine 162–asparagine 170 and asparagine 272.

It belongs to the acetaldehyde dehydrogenase family.

It carries out the reaction acetaldehyde + NAD(+) + CoA = acetyl-CoA + NADH + H(+). The polypeptide is Acetaldehyde dehydrogenase (mhpF) (Burkholderia pseudomallei (strain K96243)).